The primary structure comprises 274 residues: Large ribosomal subunit protein uL2cz/uL2cy (274 aa).

Disordered stretches follow at residues 1–25 and 224–274; these read MAIH…VKSN and NPVD…RRSK.

This sequence belongs to the universal ribosomal protein uL2 family. As to quaternary structure, part of the 50S ribosomal subunit.

It localises to the plastid. The protein localises to the chloroplast. The polypeptide is Large ribosomal subunit protein uL2cz/uL2cy (rpl2-A) (Aethionema cordifolium (Lebanon stonecress)).